The chain runs to 144 residues: MRLNTLSPAAGSKSAAKRVGRGIGSGTGKTCGRGHKGQKSRSGGGVRIGFEGGQMPLKIRLPKFGFTSRKAMVSAEVRISELAKVNGDVVDLSTLKDANLVTRNIQFAKIVLSGTIERPVTVKGLKVTKGARAAIEAAGGKIEE.

The interval 1–48 (MRLNTLSPAAGSKSAAKRVGRGIGSGTGKTCGRGHKGQKSRSGGGVRI) is disordered. Gly residues predominate over residues 21–31 (RGIGSGTGKTC).

The protein belongs to the universal ribosomal protein uL15 family. Part of the 50S ribosomal subunit.

Functionally, binds to the 23S rRNA. This Shewanella woodyi (strain ATCC 51908 / MS32) protein is Large ribosomal subunit protein uL15.